The primary structure comprises 722 residues: Zinc finger protein 600 (722 aa).

Residues 162 to 184 form a C2H2-type 1; degenerate zinc finger; that stretch reads FQCNESGKAFNCSSLLRKHQIPH. 9 consecutive C2H2-type zinc fingers follow at residues 190–212, 218–240, 246–268, 274–296, 302–324, 330–352, 358–380, 386–408, and 414–436; these read YKCD…CRCH, YKCN…RRLH, HKCN…KAIH, YKCN…RRIH, YKCE…KRIH, YKCK…KRIH, YKCN…HRLH, YKCK…TRIH, and YKCN…KSIH. The C2H2-type 11; degenerate zinc finger occupies 442–464; that stretch reads YKYEECEKVFSCGSTLETHKIIH. 9 C2H2-type zinc fingers span residues 470-492, 498-520, 526-548, 554-576, 582-604, 610-632, 638-660, 666-688, and 694-716; these read YKCK…TRIH, YKCN…RRVH, YKCN…RRLH, YKCT…TRIH, YKCN…HRIH, YKCE…RRIH, YKCK…TGLH, and YKCN…QAVH.

The protein belongs to the krueppel C2H2-type zinc-finger protein family.

It localises to the nucleus. Its function is as follows. May be involved in transcriptional regulation. This is Zinc finger protein 600 (ZNF600) from Homo sapiens (Human).